Here is a 34-residue protein sequence, read N- to C-terminus: Thermomycolin (34 aa).

Catalysis depends on Ser33, which acts as the Charge relay system.

It belongs to the peptidase S8 family.

The protein localises to the secreted. It catalyses the reaction Rather non-specific hydrolysis of proteins. Preferential cleavage: -Ala-|-Xaa-, -Tyr-|-Xaa-, -Phe-|-Xaa- in small molecular substrates.. Its function is as follows. This is an extracellular proteinase with a general specificity for apolar residues. In Malbranchea cinnamomea (Thermophilic fungus), this protein is Thermomycolin.